A 355-amino-acid polypeptide reads, in one-letter code: 3-dehydroquinate synthase (355 aa).

NAD(+) contacts are provided by residues 105-109 (GVVGD), 129-130 (TS), lysine 142, lysine 151, and 169-172 (TLKT). 3 residues coordinate Zn(2+): glutamate 184, histidine 246, and histidine 263.

It belongs to the sugar phosphate cyclases superfamily. Dehydroquinate synthase family. NAD(+) is required as a cofactor. Co(2+) serves as cofactor. The cofactor is Zn(2+).

The protein resides in the cytoplasm. The enzyme catalyses 7-phospho-2-dehydro-3-deoxy-D-arabino-heptonate = 3-dehydroquinate + phosphate. The protein operates within metabolic intermediate biosynthesis; chorismate biosynthesis; chorismate from D-erythrose 4-phosphate and phosphoenolpyruvate: step 2/7. Functionally, catalyzes the conversion of 3-deoxy-D-arabino-heptulosonate 7-phosphate (DAHP) to dehydroquinate (DHQ). The sequence is that of 3-dehydroquinate synthase from Streptococcus agalactiae serotype V (strain ATCC BAA-611 / 2603 V/R).